Reading from the N-terminus, the 151-residue chain is Transcriptional regulator MraZ (151 aa).

SpoVT-AbrB domains follow at residues 5–51 (AHEL…PVAE) and 81–124 (AEIL…GREQ).

This sequence belongs to the MraZ family. Forms oligomers.

It localises to the cytoplasm. It is found in the nucleoid. The protein is Transcriptional regulator MraZ of Neisseria meningitidis serogroup A / serotype 4A (strain DSM 15465 / Z2491).